The chain runs to 254 residues: Ribosomal RNA small subunit methyltransferase J (254 aa).

Residues 107 to 108 (RD), 123 to 124 (ER), and Asp177 contribute to the S-adenosyl-L-methionine site.

The protein belongs to the methyltransferase superfamily. RsmJ family.

The protein resides in the cytoplasm. The catalysed reaction is guanosine(1516) in 16S rRNA + S-adenosyl-L-methionine = N(2)-methylguanosine(1516) in 16S rRNA + S-adenosyl-L-homocysteine + H(+). Functionally, specifically methylates the guanosine in position 1516 of 16S rRNA. The polypeptide is Ribosomal RNA small subunit methyltransferase J (Histophilus somni (strain 129Pt) (Haemophilus somnus)).